The primary structure comprises 317 residues: Glucokinase (317 aa).

It belongs to the ROK (NagC/XylR) family. In terms of assembly, homodimer. It depends on a divalent metal cation as a cofactor.

It catalyses the reaction D-glucose + ATP = D-glucose 6-phosphate + ADP + H(+). Its function is as follows. Catalyzes the phosphorylation of D-glucose to D-glucose 6-phosphate using ATP as the phosphate donor. Can also phosphorylate 2-deoxyglucose, with lower efficiency. ITP can also serve as a phosphoryl donor. The protein is Glucokinase of Thermotoga maritima (strain ATCC 43589 / DSM 3109 / JCM 10099 / NBRC 100826 / MSB8).